A 203-amino-acid polypeptide reads, in one-letter code: Small ribosomal subunit protein uS4 (203 aa).

Residues 1–46 (MSKRQSAKYKLDRRMGENIWGRPKSPVNRREYGPGQHGQRRKGKMS) form a disordered region. An S4 RNA-binding domain is found at 94-157 (RRLDAVVYRA…QEMALVAEAQ (64 aa)).

This sequence belongs to the universal ribosomal protein uS4 family. As to quaternary structure, part of the 30S ribosomal subunit. Contacts protein S5. The interaction surface between S4 and S5 is involved in control of translational fidelity.

One of the primary rRNA binding proteins, it binds directly to 16S rRNA where it nucleates assembly of the body of the 30S subunit. In terms of biological role, with S5 and S12 plays an important role in translational accuracy. The protein is Small ribosomal subunit protein uS4 of Sphingopyxis alaskensis (strain DSM 13593 / LMG 18877 / RB2256) (Sphingomonas alaskensis).